Consider the following 113-residue polypeptide: Tubulin alpha chain (113 aa).

E52 is a GTP binding site. E52 provides a ligand contact to Mg(2+).

It belongs to the tubulin family. Dimer of alpha and beta chains. A typical microtubule is a hollow water-filled tube with an outer diameter of 25 nm and an inner diameter of 15 nM. Alpha-beta heterodimers associate head-to-tail to form protofilaments running lengthwise along the microtubule wall with the beta-tubulin subunit facing the microtubule plus end conferring a structural polarity. Microtubules usually have 13 protofilaments but different protofilament numbers can be found in some organisms and specialized cells. The cofactor is Mg(2+).

It is found in the cytoplasm. It localises to the cytoskeleton. It carries out the reaction GTP + H2O = GDP + phosphate + H(+). Tubulin is the major constituent of microtubules, a cylinder consisting of laterally associated linear protofilaments composed of alpha- and beta-tubulin heterodimers. Microtubules grow by the addition of GTP-tubulin dimers to the microtubule end, where a stabilizing cap forms. Below the cap, tubulin dimers are in GDP-bound state, owing to GTPase activity of alpha-tubulin. The sequence is that of Tubulin alpha chain (TUBA) from Picea abies (Norway spruce).